The chain runs to 267 residues: Glutamate 5-kinase (267 aa).

An ATP-binding site is contributed by K14. S54, D141, and N157 together coordinate substrate. ATP is bound by residues 177–178 (SD) and 219–225 (TGGMMSK).

The protein belongs to the glutamate 5-kinase family.

It localises to the cytoplasm. It carries out the reaction L-glutamate + ATP = L-glutamyl 5-phosphate + ADP. The protein operates within amino-acid biosynthesis; L-proline biosynthesis; L-glutamate 5-semialdehyde from L-glutamate: step 1/2. In terms of biological role, catalyzes the transfer of a phosphate group to glutamate to form L-glutamate 5-phosphate. The polypeptide is Glutamate 5-kinase (Streptococcus thermophilus (strain CNRZ 1066)).